A 172-amino-acid chain; its full sequence is Large ribosomal subunit protein uL10 (172 aa).

It belongs to the universal ribosomal protein uL10 family. As to quaternary structure, part of the ribosomal stalk of the 50S ribosomal subunit. The N-terminus interacts with L11 and the large rRNA to form the base of the stalk. The C-terminus forms an elongated spine to which L12 dimers bind in a sequential fashion forming a multimeric L10(L12)X complex.

Forms part of the ribosomal stalk, playing a central role in the interaction of the ribosome with GTP-bound translation factors. This is Large ribosomal subunit protein uL10 from Bartonella bacilliformis (strain ATCC 35685 / KC583 / Herrer 020/F12,63).